Here is a 224-residue protein sequence, read N- to C-terminus: 7-cyano-7-deazaguanine synthase (224 aa).

12-22 (LSGGLDSSTVT) is an ATP binding site. Residues Cys193, Cys201, Cys204, and Cys207 each contribute to the Zn(2+) site.

Belongs to the QueC family. It depends on Zn(2+) as a cofactor.

The enzyme catalyses 7-carboxy-7-deazaguanine + NH4(+) + ATP = 7-cyano-7-deazaguanine + ADP + phosphate + H2O + H(+). Its pathway is purine metabolism; 7-cyano-7-deazaguanine biosynthesis. Its function is as follows. Catalyzes the ATP-dependent conversion of 7-carboxy-7-deazaguanine (CDG) to 7-cyano-7-deazaguanine (preQ(0)). This is 7-cyano-7-deazaguanine synthase from Prochlorococcus marinus (strain MIT 9301).